Here is a 560-residue protein sequence, read N- to C-terminus: Glucose-6-phosphate isomerase, cytosolic (560 aa).

Position 2 is an N-acetylalanine (alanine 2). Residue glutamate 361 is the Proton donor of the active site. Residues histidine 392 and lysine 517 contribute to the active site.

This sequence belongs to the GPI family. In terms of assembly, homodimer.

Its subcellular location is the cytoplasm. It catalyses the reaction alpha-D-glucose 6-phosphate = beta-D-fructose 6-phosphate. Its pathway is carbohydrate degradation; glycolysis; D-glyceraldehyde 3-phosphate and glycerone phosphate from D-glucose: step 2/4. With respect to regulation, inhibited by glycerol-3-P (G3P). This chain is Glucose-6-phosphate isomerase, cytosolic (PGIC), found in Arabidopsis thaliana (Mouse-ear cress).